The chain runs to 267 residues: 2-keto-3-deoxy-L-rhamnonate aldolase (267 aa).

His-49 serves as the catalytic Proton acceptor. Gln-151 lines the substrate pocket. A Mg(2+)-binding site is contributed by Glu-153. Substrate-binding residues include Ala-178 and Asp-179. Position 179 (Asp-179) interacts with Mg(2+).

Belongs to the HpcH/HpaI aldolase family. KDR aldolase subfamily. As to quaternary structure, homohexamer. The cofactor is Mg(2+).

It catalyses the reaction 2-dehydro-3-deoxy-L-rhamnonate = (S)-lactaldehyde + pyruvate. Its function is as follows. Catalyzes the reversible retro-aldol cleavage of 2-keto-3-deoxy-L-rhamnonate (KDR) to pyruvate and lactaldehyde. The polypeptide is 2-keto-3-deoxy-L-rhamnonate aldolase (Salmonella gallinarum (strain 287/91 / NCTC 13346)).